Here is a 203-residue protein sequence, read N- to C-terminus: Large ribosomal subunit protein bL25 (203 aa).

This sequence belongs to the bacterial ribosomal protein bL25 family. CTC subfamily. In terms of assembly, part of the 50S ribosomal subunit; part of the 5S rRNA/L5/L18/L25 subcomplex. Contacts the 5S rRNA. Binds to the 5S rRNA independently of L5 and L18.

Functionally, this is one of the proteins that binds to the 5S RNA in the ribosome where it forms part of the central protuberance. The polypeptide is Large ribosomal subunit protein bL25 (Psychromonas ingrahamii (strain DSM 17664 / CCUG 51855 / 37)).